The chain runs to 473 residues: tRNA modification GTPase MnmE (473 aa).

Residues arginine 30, glutamate 95, and arginine 134 each contribute to the (6S)-5-formyl-5,6,7,8-tetrahydrofolate site. In terms of domain architecture, TrmE-type G spans 230–394 (GVSTVIAGRP…LKLLMASMVE (165 aa)). GTP is bound by residues 240 to 245 (NAGKST), 259 to 265 (SHMPGTT), and 284 to 287 (DTAG). Positions 244 and 265 each coordinate Mg(2+). Residue lysine 473 participates in (6S)-5-formyl-5,6,7,8-tetrahydrofolate binding.

Belongs to the TRAFAC class TrmE-Era-EngA-EngB-Septin-like GTPase superfamily. TrmE GTPase family. Homodimer. Heterotetramer of two MnmE and two MnmG subunits. Requires K(+) as cofactor.

The protein resides in the cytoplasm. Its function is as follows. Exhibits a very high intrinsic GTPase hydrolysis rate. Involved in the addition of a carboxymethylaminomethyl (cmnm) group at the wobble position (U34) of certain tRNAs, forming tRNA-cmnm(5)s(2)U34. This chain is tRNA modification GTPase MnmE, found in Chlorobium luteolum (strain DSM 273 / BCRC 81028 / 2530) (Pelodictyon luteolum).